The following is a 172-amino-acid chain: Protein-export protein SecB (172 aa).

Residues 152–172 are disordered; sequence AQGAEGGNSGIVMPDGSQARH.

Belongs to the SecB family. Homotetramer, a dimer of dimers. One homotetramer interacts with 1 SecA dimer.

The protein localises to the cytoplasm. Its function is as follows. One of the proteins required for the normal export of preproteins out of the cell cytoplasm. It is a molecular chaperone that binds to a subset of precursor proteins, maintaining them in a translocation-competent state. It also specifically binds to its receptor SecA. The sequence is that of Protein-export protein SecB from Cupriavidus necator (strain ATCC 17699 / DSM 428 / KCTC 22496 / NCIMB 10442 / H16 / Stanier 337) (Ralstonia eutropha).